The sequence spans 156 residues: RING finger protein 224 (156 aa).

The RING-type zinc finger occupies Cys-23 to Arg-70.

The protein is RING finger protein 224 (Rnf224) of Mus musculus (Mouse).